The chain runs to 596 residues: Elongation factor 4 (596 aa).

The 183-residue stretch at 2 to 184 (KHIRNFSIIA…EIVAKIPPPV (183 aa)) folds into the tr-type G domain. Residues 14 to 19 (DHGKST) and 131 to 134 (NKID) contribute to the GTP site.

It belongs to the TRAFAC class translation factor GTPase superfamily. Classic translation factor GTPase family. LepA subfamily.

The protein resides in the cell inner membrane. The enzyme catalyses GTP + H2O = GDP + phosphate + H(+). Required for accurate and efficient protein synthesis under certain stress conditions. May act as a fidelity factor of the translation reaction, by catalyzing a one-codon backward translocation of tRNAs on improperly translocated ribosomes. Back-translocation proceeds from a post-translocation (POST) complex to a pre-translocation (PRE) complex, thus giving elongation factor G a second chance to translocate the tRNAs correctly. Binds to ribosomes in a GTP-dependent manner. This is Elongation factor 4 from Shewanella denitrificans (strain OS217 / ATCC BAA-1090 / DSM 15013).